The following is a 653-amino-acid chain: Modification methylase StsI (653 aa).

It belongs to the N(4)/N(6)-methyltransferase family. Monomer.

It catalyses the reaction a 2'-deoxyadenosine in DNA + S-adenosyl-L-methionine = an N(6)-methyl-2'-deoxyadenosine in DNA + S-adenosyl-L-homocysteine + H(+). An alpha subtype methylase that recognizes the double-stranded sequence 5'-GGATG-3' in one strand and 3'-CATCC-5' in the other, methylates A of both strands, and protects the DNA from cleavage by the StsI endonuclease. The 2 domains of the protein participate in modification of the two strands. The polypeptide is Modification methylase StsI (stsIM) (Streptococcus sanguinis).